The following is a 321-amino-acid chain: Ubiquitin-conjugating enzyme E2 U (321 aa).

The UBC core domain maps to 4–153; the sequence is RAYLLLHRDF…LRLFNRPLQM (150 aa). The active-site Glycyl thioester intermediate is the Cys-89. Residues 285–321 are disordered; it reads WKSDTSLYENDTDEPREEEVEDLISWTNTLNTNTSED. Residues 294–306 show a composition bias toward acidic residues; sequence NDTDEPREEEVED. The span at 309–321 shows a compositional bias: polar residues; that stretch reads SWTNTLNTNTSED.

The protein belongs to the ubiquitin-conjugating enzyme family. In terms of processing, autoubiquitinated in vitro in the presence of UBR5.

The catalysed reaction is S-ubiquitinyl-[E1 ubiquitin-activating enzyme]-L-cysteine + [E2 ubiquitin-conjugating enzyme]-L-cysteine = [E1 ubiquitin-activating enzyme]-L-cysteine + S-ubiquitinyl-[E2 ubiquitin-conjugating enzyme]-L-cysteine.. Its pathway is protein modification; protein ubiquitination. Its function is as follows. Catalyzes the covalent attachment of ubiquitin to other proteins. This is Ubiquitin-conjugating enzyme E2 U (UBE2U) from Homo sapiens (Human).